A 310-amino-acid chain; its full sequence is Aspartate carbamoyltransferase catalytic subunit 2 (310 aa).

Positions 55 and 56 each coordinate carbamoyl phosphate. K85 serves as a coordination point for L-aspartate. Residues R106, H134, and Q137 each contribute to the carbamoyl phosphate site. R167 and R228 together coordinate L-aspartate. L266 and P267 together coordinate carbamoyl phosphate.

It belongs to the aspartate/ornithine carbamoyltransferase superfamily. ATCase family. In terms of assembly, heterododecamer (2C3:3R2) of six catalytic PyrB chains organized as two trimers (C3), and six regulatory PyrI chains organized as three dimers (R2).

The catalysed reaction is carbamoyl phosphate + L-aspartate = N-carbamoyl-L-aspartate + phosphate + H(+). It functions in the pathway pyrimidine metabolism; UMP biosynthesis via de novo pathway; (S)-dihydroorotate from bicarbonate: step 2/3. In terms of biological role, catalyzes the condensation of carbamoyl phosphate and aspartate to form carbamoyl aspartate and inorganic phosphate, the committed step in the de novo pyrimidine nucleotide biosynthesis pathway. The protein is Aspartate carbamoyltransferase catalytic subunit 2 of Shewanella halifaxensis (strain HAW-EB4).